The sequence spans 748 residues: Long-chain-alcohol oxidase FAO4B (748 aa).

Basic residues predominate over residues 1-18; sequence MEDVRRRNRGHPLLRSKK. The interval 1 to 25 is disordered; the sequence is MEDVRRRNRGHPLLRSKKRGEGYNH. 2 helical membrane passes run 89–109 and 140–160; these read IILM…SLCL and FLLP…FYFF. 238 to 253 provides a ligand contact to FAD; it reads CDAVVVGSGSGGGVAA. H679 (proton acceptor) is an active-site residue.

It belongs to the GMC oxidoreductase family.

Its subcellular location is the membrane. The enzyme catalyses a long-chain primary fatty alcohol + O2 = a long-chain fatty aldehyde + H2O2. Its function is as follows. Long-chain fatty alcohol oxidase involved in the omega-oxidation pathway of lipid degradation. The chain is Long-chain-alcohol oxidase FAO4B (FAO4B) from Arabidopsis thaliana (Mouse-ear cress).